A 321-amino-acid polypeptide reads, in one-letter code: Phosphate-import protein PhnD (321 aa).

The first 22 residues, 1 to 22 (MKIRAHHKIATAAACVALLASA), serve as a signal peptide directing secretion. Cys-23 is lipidated: N-palmitoyl cysteine. The S-diacylglycerol cysteine moiety is linked to residue Cys-23.

It belongs to the phosphate/phosphite/phosphonate binding protein family. The complex is composed of two ATP-binding proteins (PhnC), two transmembrane proteins (PhnE) and a solute-binding protein (PhnD).

It is found in the cell membrane. Its function is as follows. Part of the ABC transporter complex PhnCDE involved in phosphate import. Responsible for phosphate binding. The polypeptide is Phosphate-import protein PhnD (phnD) (Mycolicibacterium smegmatis (strain ATCC 700084 / mc(2)155) (Mycobacterium smegmatis)).